The chain runs to 449 residues: Nucleoprotein (449 aa).

Positions 1-55 (MSFTPGKQSSSRASSGNRSGNGILKWADQSDQSRNVQTRGRRVQSKQTATSQQPS) are disordered. The span at 9–22 (SSSRASSGNRSGNG) shows a compositional bias: low complexity. Polar residues-rich tracts occupy residues 29–38 (QSDQSRNVQT) and 45–55 (SKQTATSQQPS). The tract at residues 52–194 (QQPSGGTVVP…GYYIEGSGRS (143 aa)) is RNA-binding. The CoV N NTD domain occupies 61 to 190 (PYYSWFSGIT…VLPQGYYIEG (130 aa)). 3 residues coordinate RNA: Arg-106, Arg-122, and Arg-164. 3 disordered regions span residues 158-231 (PADI…VTPD), 266-297 (ILNKPRQKRSPNKQCTVQQCFGKRGPNQNFGG), and 387-449 (MMNI…TSEI). Ser-167 carries the phosphoserine; by host modification. Thr-174 is modified (phosphothreonine; by host). Position 191 is a phosphoserine; by host (Ser-191). Polar residues-rich tracts occupy residues 194-204 (SAPNSRSTSRA) and 212-227 (GSRSRANSGNRTSTPG). Positions 259–384 (AKEVRQKILN…QNLNAYQHQE (126 aa)) constitute a CoV N CTD domain. A compositionally biased stretch (basic residues) spans 266–276 (ILNKPRQKRSP). A dimerization region spans residues 266–385 (ILNKPRQKRS…NLNAYQHQED (120 aa)). Residue Ser-391 is modified to Phosphoserine; by host. Residues 400 to 410 (QKNGQVENDNI) are compositionally biased toward polar residues. The span at 423–440 (KSRELTAEDISLLKKMDE) shows a compositional bias: basic and acidic residues. The residue at position 424 (Ser-424) is a Phosphoserine; by host. Residue Thr-428 is modified to Phosphothreonine; by host.

It belongs to the betacoronavirus nucleocapsid protein family. In terms of assembly, homooligomer. Both monomeric and oligomeric forms interact with RNA. Interacts with protein M. Interacts with NSP3; this interaction serves to tether the genome to the newly translated replicase-transcriptase complex at a very early stage of infection. Post-translationally, ADP-ribosylated. The ADP-ribosylation is retained in the virion during infection. In terms of processing, phosphorylated on serine and threonine residues.

It localises to the virion. It is found in the host endoplasmic reticulum-Golgi intermediate compartment. The protein localises to the host Golgi apparatus. Its function is as follows. Packages the positive strand viral genome RNA into a helical ribonucleocapsid (RNP) and plays a fundamental role during virion assembly through its interactions with the viral genome and membrane protein M. Plays an important role in enhancing the efficiency of subgenomic viral RNA transcription as well as viral replication. This chain is Nucleoprotein, found in Sus scrofa (Pig).